The following is a 207-amino-acid chain: Octanoyltransferase (207 aa).

Residues 27–203 enclose the BPL/LPL catalytic domain; the sequence is ADTEDELWVV…HLETQFTPKA (177 aa). Substrate is bound by residues 66–73, 133–135, and 146–148; these read RGGQITYH, SLG, and GLA. Cysteine 164 functions as the Acyl-thioester intermediate in the catalytic mechanism.

Belongs to the LipB family.

The protein localises to the cytoplasm. It catalyses the reaction octanoyl-[ACP] + L-lysyl-[protein] = N(6)-octanoyl-L-lysyl-[protein] + holo-[ACP] + H(+). It functions in the pathway protein modification; protein lipoylation via endogenous pathway; protein N(6)-(lipoyl)lysine from octanoyl-[acyl-carrier-protein]: step 1/2. Its function is as follows. Catalyzes the transfer of endogenously produced octanoic acid from octanoyl-acyl-carrier-protein onto the lipoyl domains of lipoate-dependent enzymes. Lipoyl-ACP can also act as a substrate although octanoyl-ACP is likely to be the physiological substrate. This Neisseria meningitidis serogroup B (strain ATCC BAA-335 / MC58) protein is Octanoyltransferase.